We begin with the raw amino-acid sequence, 1135 residues long: Retinoblastoma-like protein 2 (1135 aa).

The segment at 1–43 (MASGGNQSSPPPPAAAASSEEEEEDGDTADRAQPAGSPSHQIQ) is disordered. Residue Ser-410 is modified to Phosphoserine. A Phosphothreonine modification is found at Thr-414. The interval 414–613 (TPVSTATHSL…DRIRDNENRV (200 aa)) is domain A. The segment at 414 to 1021 (TPVSTATHSL…QTFAMKYSQA (608 aa)) is pocket; binds E1A. Ser-417 is a glycosylation site (O-linked (GlcNAc) serine). The spacer stretch occupies residues 614 to 824 (PTCEEVTPPH…QGQPLTSSSI (211 aa)). Ser-636 bears the Phosphoserine mark. Thr-639 is subject to Phosphothreonine. Disordered stretches follow at residues 649–698 (DAGG…PPQP), 806–825 (ISPG…SSIR), and 932–995 (RRNS…EEEE). Residues 656–674 (SVTSPTTLYDRYSSPTVST) show a composition bias toward polar residues. Ser-659, Ser-669, and Ser-684 each carry phosphoserine. The segment covering 806 to 818 (ISPGGQQQNQGQP) has biased composition (low complexity). Positions 825-1021 (RPRKTSSLSL…QTFAMKYSQA (197 aa)) are domain B. Polar residues-rich tracts occupy residues 935–950 (SGSC…PTEL) and 958–969 (DSSPVMRSNSTL). A phosphoserine mark is found at Ser-942, Ser-946, Ser-960, Ser-965, and Ser-967. At Thr-968 the chain carries Phosphothreonine. Positions 971-981 (VPQPSSAPPTP) are enriched in pro residues. A phosphoserine mark is found at Ser-975 and Ser-976. At Thr-980 the chain carries Phosphothreonine. 4 positions are modified to phosphoserine: Ser-1031, Ser-1064, Ser-1076, and Ser-1108.

The protein belongs to the retinoblastoma protein (RB) family. As to quaternary structure, interacts with AATF, KMT5B and KMT5C. Component of the DREAM complex (also named LINC complex) at least composed of E2F4, E2F5, LIN9, LIN37, LIN52, LIN54, MYBL1, MYBL2, RBL1, RBL2, RBBP4, TFDP1 and TFDP2. The complex exists in quiescent cells where it represses cell cycle-dependent genes. It dissociates in S phase when LIN9, LIN37, LIN52 and LIN54 form a subcomplex that binds to MYBL2. Interacts with USP4. Part of the peroxisome proliferator activated receptor alpha (PPAR-alpha) interacting complex (PRIC). Interacts with RINT1. Interacts with PML. Interacts with RBBP9. Interacts with CD53. During G0 and early G1 phase of the cell cycle, phosphorylated on Ser-636 and on 5 sites within the domain B. Phosphorylation on Ser-669 in G1 leads to its ubiquitin-dependent proteolysis.

Its subcellular location is the nucleus. Functionally, key regulator of entry into cell division. Directly involved in heterochromatin formation by maintaining overall chromatin structure and, in particular, that of constitutive heterochromatin by stabilizing histone methylation. Recruits and targets histone methyltransferases KMT5B and KMT5C, leading to epigenetic transcriptional repression. Controls histone H4 'Lys-20' trimethylation. Probably acts as a transcription repressor by recruiting chromatin-modifying enzymes to promoters. Potent inhibitor of E2F-mediated trans-activation, associates preferentially with E2F5. Binds to cyclins A and E. Binds to and may be involved in the transforming capacity of the adenovirus E1A protein. May act as a tumor suppressor. The protein is Retinoblastoma-like protein 2 (Rbl2) of Rattus norvegicus (Rat).